Consider the following 173-residue polypeptide: NADH-quinone oxidoreductase subunit B 2 (173 aa).

[4Fe-4S] cluster is bound by residues cysteine 42, cysteine 43, cysteine 107, and cysteine 137.

The protein belongs to the complex I 20 kDa subunit family. NDH-1 is composed of 14 different subunits. Subunits NuoB, C, D, E, F, and G constitute the peripheral sector of the complex. [4Fe-4S] cluster is required as a cofactor.

It localises to the cell inner membrane. The enzyme catalyses a quinone + NADH + 5 H(+)(in) = a quinol + NAD(+) + 4 H(+)(out). In terms of biological role, NDH-1 shuttles electrons from NADH, via FMN and iron-sulfur (Fe-S) centers, to quinones in the respiratory chain. Couples the redox reaction to proton translocation (for every two electrons transferred, four hydrogen ions are translocated across the cytoplasmic membrane), and thus conserves the redox energy in a proton gradient. In Anaeromyxobacter dehalogenans (strain 2CP-C), this protein is NADH-quinone oxidoreductase subunit B 2.